The primary structure comprises 409 residues: Arginine deiminase (409 aa).

The Amidino-cysteine intermediate role is filled by C399.

Belongs to the arginine deiminase family.

The protein localises to the cytoplasm. It catalyses the reaction L-arginine + H2O = L-citrulline + NH4(+). Its pathway is amino-acid degradation; L-arginine degradation via ADI pathway; carbamoyl phosphate from L-arginine: step 1/2. The sequence is that of Arginine deiminase from Streptococcus gordonii (strain Challis / ATCC 35105 / BCRC 15272 / CH1 / DL1 / V288).